Reading from the N-terminus, the 145-residue chain is MKVLIQRVTQAAVDVDSITIGQIDAGILALVGVEKQDNRETLGRMAQKLLKYRIFPDSEGKMNLSLTDTGGGLLVVSQFTLAADTRKGLRPSFSSSAPPDLARSLFDEFVAALRAQHPNVETGRFGADMKVRLINDGPVTFMLES.

A Gly-cisPro motif, important for rejection of L-amino acids motif is present at residues 137-138; it reads GP.

It belongs to the DTD family. As to quaternary structure, homodimer.

The protein localises to the cytoplasm. The enzyme catalyses glycyl-tRNA(Ala) + H2O = tRNA(Ala) + glycine + H(+). The catalysed reaction is a D-aminoacyl-tRNA + H2O = a tRNA + a D-alpha-amino acid + H(+). Its function is as follows. An aminoacyl-tRNA editing enzyme that deacylates mischarged D-aminoacyl-tRNAs. Also deacylates mischarged glycyl-tRNA(Ala), protecting cells against glycine mischarging by AlaRS. Acts via tRNA-based rather than protein-based catalysis; rejects L-amino acids rather than detecting D-amino acids in the active site. By recycling D-aminoacyl-tRNA to D-amino acids and free tRNA molecules, this enzyme counteracts the toxicity associated with the formation of D-aminoacyl-tRNA entities in vivo and helps enforce protein L-homochirality. The protein is D-aminoacyl-tRNA deacylase of Teredinibacter turnerae (strain ATCC 39867 / T7901).